The following is a 151-amino-acid chain: Histone H2A.2.1 (151 aa).

N-acetylmethionine is present on M1. Disordered regions lie at residues 1–22 (MDGSKAKKVAAKKFGGPRKKSV) and 129–151 (EKAEKAGAAPKSPKKTTKSPKKA). Short sequence motifs (SPKK motif) lie at residues 140–143 (SPKK) and 147–150 (SPKK). Positions 140-151 (SPKKTTKSPKKA) are enriched in basic residues.

It belongs to the histone H2A family. In terms of assembly, the nucleosome is a histone octamer containing two molecules each of H2A, H2B, H3 and H4 assembled in one H3-H4 heterotetramer and two H2A-H2B heterodimers. The octamer wraps approximately 147 bp of DNA. Post-translationally, phosphorylated within its C-terminal part, probably at the SPKK motifs.

It is found in the nucleus. Its subcellular location is the chromosome. In terms of biological role, core component of nucleosome. Nucleosomes wrap and compact DNA into chromatin, limiting DNA accessibility to the cellular machineries which require DNA as a template. Histones thereby play a central role in transcription regulation, DNA repair, DNA replication and chromosomal stability. DNA accessibility is regulated via a complex set of post-translational modifications of histones, also called histone code, and nucleosome remodeling. The sequence is that of Histone H2A.2.1 from Triticum aestivum (Wheat).